A 289-amino-acid chain; its full sequence is Phosphatidylglycerol--prolipoprotein diacylglyceryl transferase (289 aa).

Helical transmembrane passes span 18–38 (FTIYWYGVLIGLGVIIGYVMA), 54–74 (DFVMYVIPVAIIFARLYYVIF), 86–106 (VFYIWEGGLAIHGALIGGVLT), and 116–136 (LSFWQLMDVAAPSILIGQAIG). Arginine 137 contributes to the a 1,2-diacyl-sn-glycero-3-phospho-(1'-sn-glycerol) binding site. 3 helical membrane-spanning segments follow: residues 177–197 (HPTFLYESIWNFIGVVVLLLL), 205–225 (GELFFSYLIWYSIGRFFIEGM), and 236–256 (LRTAQIVSILLIVGALLLWWY).

The protein belongs to the Lgt family.

The protein localises to the cell membrane. The enzyme catalyses L-cysteinyl-[prolipoprotein] + a 1,2-diacyl-sn-glycero-3-phospho-(1'-sn-glycerol) = an S-1,2-diacyl-sn-glyceryl-L-cysteinyl-[prolipoprotein] + sn-glycerol 1-phosphate + H(+). It participates in protein modification; lipoprotein biosynthesis (diacylglyceryl transfer). Catalyzes the transfer of the diacylglyceryl group from phosphatidylglycerol to the sulfhydryl group of the N-terminal cysteine of a prolipoprotein, the first step in the formation of mature lipoproteins. This Halalkalibacterium halodurans (strain ATCC BAA-125 / DSM 18197 / FERM 7344 / JCM 9153 / C-125) (Bacillus halodurans) protein is Phosphatidylglycerol--prolipoprotein diacylglyceryl transferase.